A 492-amino-acid chain; its full sequence is V-type proton ATPase subunit B 1 (492 aa).

It belongs to the ATPase alpha/beta chains family. V-ATPase is a heteromultimeric enzyme composed of a peripheral catalytic V1 complex (main components: subunits A, B, C, D, E, and F) attached to an integral membrane V0 proton pore complex (main component: the proteolipid protein).

In terms of biological role, non-catalytic subunit of the peripheral V1 complex of vacuolar ATPase. V-ATPase is responsible for acidifying a variety of intracellular compartments in eukaryotic cells. In Acetabularia acetabulum (Mermaid's wine glass), this protein is V-type proton ATPase subunit B 1.